We begin with the raw amino-acid sequence, 218 residues long: Ribonuclease HII (218 aa).

The RNase H type-2 domain occupies 12 to 206; sequence GRVAGVDEVG…VREALARSAL (195 aa). Positions 18, 19, and 115 each coordinate a divalent metal cation.

This sequence belongs to the RNase HII family. It depends on Mn(2+) as a cofactor. Mg(2+) is required as a cofactor.

It is found in the cytoplasm. It catalyses the reaction Endonucleolytic cleavage to 5'-phosphomonoester.. In terms of biological role, endonuclease that specifically degrades the RNA of RNA-DNA hybrids. In Rhodospirillum rubrum (strain ATCC 11170 / ATH 1.1.1 / DSM 467 / LMG 4362 / NCIMB 8255 / S1), this protein is Ribonuclease HII.